The following is a 379-amino-acid chain: Protein hairy (379 aa).

Residues 20–50 (STQQQQQQQQHKEAPIKSDRRSNKPIMEKRR) are disordered. The span at 29 to 47 (QHKEAPIKSDRRSNKPIME) shows a compositional bias: basic and acidic residues. The interval 36–55 (KSDRRSNKPIMEKRRRARIN) is interaction with Topors. Residues 38–95 (DRRSNKPIMEKRRRARINNCLNELKTLILDATKKDPARHSKLEKADILEKTVKHLQEL) form the bHLH domain. In terms of domain architecture, Orange spans 114 to 143 (FKAGFADCANEVSRFPGLDSTQRRRLLQHL). Disordered regions lie at residues 167 to 208 (QSLH…NTTA) and 298 to 345 (QRTA…VKPS). 2 stretches are compositionally biased toward low complexity: residues 182–207 (PEQEPSVTPVAASGNNNSSSNNTNTT) and 301–328 (ASTGSASSHSSAGYESAPSSSSSRGSYA). The WRPW motif motif lies at 376–379 (WRPW).

As to quaternary structure, transcription repression requires formation of a complex with a corepressor protein (Groucho).

It localises to the nucleus. Functionally, pair-rule protein that regulates embryonic segmentation and adult bristle patterning. Transcriptional repressor of genes that require a bHLH protein for their transcription (e.g. ftz). The chain is Protein hairy from Drosophila virilis (Fruit fly).